We begin with the raw amino-acid sequence, 765 residues long: Myotubularin-related protein 10-A (765 aa).

Residues 209–650 (FETYSDWDRE…THIKLWKLCY (442 aa)) form the Myotubularin phosphatase domain.

Belongs to the protein-tyrosine phosphatase family. Non-receptor class myotubularin subfamily.

This Xenopus laevis (African clawed frog) protein is Myotubularin-related protein 10-A (mtmr10-a).